The chain runs to 483 residues: ATP synthase subunit beta (483 aa).

ATP is bound at residue 168 to 175 (GGAGVGKT).

This sequence belongs to the ATPase alpha/beta chains family. As to quaternary structure, F-type ATPases have 2 components, CF(1) - the catalytic core - and CF(0) - the membrane proton channel. CF(1) has five subunits: alpha(3), beta(3), gamma(1), delta(1), epsilon(1). CF(0) has three main subunits: a(1), b(2) and c(9-12). The alpha and beta chains form an alternating ring which encloses part of the gamma chain. CF(1) is attached to CF(0) by a central stalk formed by the gamma and epsilon chains, while a peripheral stalk is formed by the delta and b chains.

The protein resides in the cell membrane. The enzyme catalyses ATP + H2O + 4 H(+)(in) = ADP + phosphate + 5 H(+)(out). Produces ATP from ADP in the presence of a proton gradient across the membrane. The catalytic sites are hosted primarily by the beta subunits. The sequence is that of ATP synthase subunit beta from Mycobacterium ulcerans (strain Agy99).